Here is a 484-residue protein sequence, read N- to C-terminus: Probable D-lactate dehydrogenase, mitochondrial (484 aa).

The transit peptide at 1–52 directs the protein to the mitochondrion; it reads MAMLLRVATQRLSPWRSFCSRGSQGGLSQDFVEALKAVVGSPHVSTASAVRE. Position 36 is an N6-acetyllysine (lysine 36). The FAD-binding PCMH-type domain occupies 62 to 242; that stretch reads RCQPPDAVVW…TSTTLRLHPA (181 aa). An N6-acetyllysine modification is found at lysine 292. An N6-acetyllysine; alternate modification is found at lysine 335. Lysine 335 carries the post-translational modification N6-succinyllysine; alternate. 2 positions are modified to N6-acetyllysine: lysine 422 and lysine 449.

This sequence belongs to the FAD-binding oxidoreductase/transferase type 4 family. In terms of assembly, interacts with CSRP3. FAD is required as a cofactor. As to expression, readily detected in liver and kidney, with a weaker signal observed in heart, skeletal muscle, stomach, brain, and lung.

Its subcellular location is the mitochondrion. The catalysed reaction is (R)-lactate + 2 Fe(III)-[cytochrome c] = 2 Fe(II)-[cytochrome c] + pyruvate + 2 H(+). In terms of biological role, involved in D-lactate, but not L-lactate catabolic process. This chain is Probable D-lactate dehydrogenase, mitochondrial, found in Mus musculus (Mouse).